A 794-amino-acid chain; its full sequence is Transcription factor TOG1 (794 aa).

Zn(2+) is bound by residues Cys18, Cys21, Cys28, Cys34, Cys37, and Cys44. Positions Cys18–Cys44 form a DNA-binding region, zn(2)-C6 fungal-type.

The protein localises to the nucleus. In terms of biological role, transcriptional activator required for growth on non-fermentable carbon sources and that regulates genes involved in fatty acid utilization. Acts as a direct activator that binds the promoters of oleate utilizing genes, encoded key enzymes in beta-oxidation and NADPH regeneration (POX1, FOX2,POT1 and IDP2), the glyoxylate shunt (MLS1 and ICL1), and gluconeogenesis (PCK1 and FBP1). Also regulates the abundance of peroxisomes that are vital for fatty acid oxidation. This Saccharomyces cerevisiae (strain ATCC 204508 / S288c) (Baker's yeast) protein is Transcription factor TOG1.